The chain runs to 159 residues: Small ribosomal subunit protein uS7 (159 aa).

Belongs to the universal ribosomal protein uS7 family. Part of the 30S ribosomal subunit. Contacts proteins S9 and S11.

Its function is as follows. One of the primary rRNA binding proteins, it binds directly to 16S rRNA where it nucleates assembly of the head domain of the 30S subunit. Is located at the subunit interface close to the decoding center, probably blocks exit of the E-site tRNA. The sequence is that of Small ribosomal subunit protein uS7 from Wolbachia pipientis wMel.